A 172-amino-acid chain; its full sequence is Ribosome maturation factor RimM (172 aa).

The 73-residue stretch at 96-168 (DGEFYYHEII…RIEVELMEGL (73 aa)) folds into the PRC barrel domain.

The protein belongs to the RimM family. As to quaternary structure, binds ribosomal protein uS19.

It localises to the cytoplasm. In terms of biological role, an accessory protein needed during the final step in the assembly of 30S ribosomal subunit, possibly for assembly of the head region. Essential for efficient processing of 16S rRNA. May be needed both before and after RbfA during the maturation of 16S rRNA. It has affinity for free ribosomal 30S subunits but not for 70S ribosomes. In Streptococcus thermophilus (strain CNRZ 1066), this protein is Ribosome maturation factor RimM.